Reading from the N-terminus, the 138-residue chain is Small ribosomal subunit protein uS11c (138 aa).

Belongs to the universal ribosomal protein uS11 family. Part of the 30S ribosomal subunit.

It is found in the plastid. The protein resides in the chloroplast. This is Small ribosomal subunit protein uS11c from Illicium oligandrum (Star anise).